Reading from the N-terminus, the 204-residue chain is Molybdenum cofactor guanylyltransferase (204 aa).

GTP contacts are provided by residues 12–14, Lys-25, Asn-53, Asp-71, and Asp-101; that span reads LAG. Residue Asp-101 coordinates Mg(2+).

This sequence belongs to the MobA family. Monomer. The cofactor is Mg(2+).

The protein resides in the cytoplasm. The enzyme catalyses Mo-molybdopterin + GTP + H(+) = Mo-molybdopterin guanine dinucleotide + diphosphate. Functionally, transfers a GMP moiety from GTP to Mo-molybdopterin (Mo-MPT) cofactor (Moco or molybdenum cofactor) to form Mo-molybdopterin guanine dinucleotide (Mo-MGD) cofactor. This is Molybdenum cofactor guanylyltransferase from Ralstonia pickettii (strain 12J).